We begin with the raw amino-acid sequence, 445 residues long: Glutamate--tRNA ligase 2 (445 aa).

Positions 10-20 (PSPTGRLHVGN) match the 'HIGH' region motif. The short motif at 241–245 (ALSKR) is the 'KMSKS' region element. K244 provides a ligand contact to ATP.

It belongs to the class-I aminoacyl-tRNA synthetase family. Glutamate--tRNA ligase type 1 subfamily. In terms of assembly, monomer.

Its subcellular location is the cytoplasm. It carries out the reaction tRNA(Glu) + L-glutamate + ATP = L-glutamyl-tRNA(Glu) + AMP + diphosphate. In terms of biological role, catalyzes the attachment of glutamate to tRNA(Glu) in a two-step reaction: glutamate is first activated by ATP to form Glu-AMP and then transferred to the acceptor end of tRNA(Glu). This chain is Glutamate--tRNA ligase 2, found in Hyphomonas neptunium (strain ATCC 15444).